Here is a 360-residue protein sequence, read N- to C-terminus: Nucleoporin SEH1-A (360 aa).

WD repeat units follow at residues 10 to 49, 55 to 96, 111 to 152, 160 to 210, 217 to 258, and 276 to 315; these read DHKD…NWHC, THSG…SNDK, DSRT…NLSQ, SCKL…RKYA, SVSD…KELS, and NHNS…NWKC.

The protein belongs to the WD repeat SEC13 family. In terms of assembly, component of the Nup107-160 subcomplex of the nuclear pore complex (NPC). The Nup107-160 subcomplex includes NUP160, NUP133, NUP107, NUP98, NUP85, NUP43, NUP37, SEH1 and SEC13. Component of the GATOR2 subcomplex, composed of MIOS, SEC13, SEH1L, WDR24 and WDR59. The GATOR2 complex interacts with CASTOR1 and CASTOR2; the interaction is negatively regulated by arginine. The GATOR2 complex interacts with SESN1, SESN2 and SESN3; the interaction is negatively regulated by amino acids.

It is found in the chromosome. The protein localises to the centromere. The protein resides in the kinetochore. Its subcellular location is the nucleus. It localises to the nuclear pore complex. It is found in the lysosome membrane. With respect to regulation, the GATOR2 complex is negatively regulated by the upstream amino acid sensors CASTOR1 and SESN2, which sequester the GATOR2 complex in absence of amino acids. In the presence of abundant amino acids, GATOR2 is released from CASTOR1 and SESN2 and activated. Its function is as follows. Component of the Nup107-160 subcomplex of the nuclear pore complex (NPC). The Nup107-160 subcomplex is required for the assembly of a functional NPC. The Nup107-160 subcomplex is also required for normal kinetochore microtubule attachment, mitotic progression and chromosome segregation. This subunit plays a role in recruitment of the Nup107-160 subcomplex to the kinetochore. As a component of the GATOR2 complex, functions as an activator of the amino acid-sensing branch of the mTORC1 signaling pathway. The GATOR2 complex indirectly activates mTORC1 through the inhibition of the GATOR1 subcomplex. GATOR2 probably acts as an E3 ubiquitin-protein ligase toward GATOR1. In the presence of abundant amino acids, the GATOR2 complex mediates ubiquitination of the NPRL2 core component of the GATOR1 complex, leading to GATOR1 inactivation. In the absence of amino acids, GATOR2 is inhibited, activating the GATOR1 complex. This Xenopus laevis (African clawed frog) protein is Nucleoporin SEH1-A (seh1l-a).